Reading from the N-terminus, the 402-residue chain is Acetate kinase (402 aa).

A Mg(2+)-binding site is contributed by Asn-7. Position 14 (Lys-14) interacts with ATP. Arg-95 contacts substrate. The active-site Proton donor/acceptor is Asp-152. ATP-binding positions include 212–216 (HLGNG), 286–288 (DMR), and 334–338 (GIGEN). Glu-388 is a Mg(2+) binding site.

Belongs to the acetokinase family. In terms of assembly, homodimer. Requires Mg(2+) as cofactor. Mn(2+) is required as a cofactor.

The protein resides in the cytoplasm. The enzyme catalyses acetate + ATP = acetyl phosphate + ADP. Its pathway is metabolic intermediate biosynthesis; acetyl-CoA biosynthesis; acetyl-CoA from acetate: step 1/2. In terms of biological role, catalyzes the formation of acetyl phosphate from acetate and ATP. Can also catalyze the reverse reaction. The sequence is that of Acetate kinase from Nitratidesulfovibrio vulgaris (strain ATCC 29579 / DSM 644 / CCUG 34227 / NCIMB 8303 / VKM B-1760 / Hildenborough) (Desulfovibrio vulgaris).